The chain runs to 173 residues: Phosphopantetheine adenylyltransferase (173 aa).

Serine 9 is a substrate binding site. Residues 9 to 10 and histidine 17 contribute to the ATP site; that span reads SF. Substrate-binding residues include lysine 41, threonine 73, and arginine 87. ATP-binding positions include 88–90, glutamate 98, and 123–129; these read GVR and YQYLSSS.

It belongs to the bacterial CoaD family. In terms of assembly, homohexamer. Mg(2+) is required as a cofactor.

The protein resides in the cytoplasm. The catalysed reaction is (R)-4'-phosphopantetheine + ATP + H(+) = 3'-dephospho-CoA + diphosphate. It functions in the pathway cofactor biosynthesis; coenzyme A biosynthesis; CoA from (R)-pantothenate: step 4/5. Reversibly transfers an adenylyl group from ATP to 4'-phosphopantetheine, yielding dephospho-CoA (dPCoA) and pyrophosphate. This Limosilactobacillus fermentum (strain NBRC 3956 / LMG 18251) (Lactobacillus fermentum) protein is Phosphopantetheine adenylyltransferase.